Consider the following 232-residue polypeptide: Ribose-5-phosphate isomerase A (232 aa).

Substrate is bound by residues 28–31 (TGST), 83–86 (DGAD), and 96–99 (KGGG). The Proton acceptor role is filled by glutamate 105. Lysine 123 provides a ligand contact to substrate.

This sequence belongs to the ribose 5-phosphate isomerase family. Homodimer.

The enzyme catalyses aldehydo-D-ribose 5-phosphate = D-ribulose 5-phosphate. It functions in the pathway carbohydrate degradation; pentose phosphate pathway; D-ribose 5-phosphate from D-ribulose 5-phosphate (non-oxidative stage): step 1/1. Its function is as follows. Catalyzes the reversible conversion of ribose-5-phosphate to ribulose 5-phosphate. This chain is Ribose-5-phosphate isomerase A, found in Nitrobacter hamburgensis (strain DSM 10229 / NCIMB 13809 / X14).